Reading from the N-terminus, the 121-residue chain is Large ribosomal subunit protein uL18 (121 aa).

Belongs to the universal ribosomal protein uL18 family. In terms of assembly, part of the 50S ribosomal subunit; part of the 5S rRNA/L5/L18/L25 subcomplex. Contacts the 5S and 23S rRNAs.

Functionally, this is one of the proteins that bind and probably mediate the attachment of the 5S RNA into the large ribosomal subunit, where it forms part of the central protuberance. This Roseiflexus castenholzii (strain DSM 13941 / HLO8) protein is Large ribosomal subunit protein uL18.